We begin with the raw amino-acid sequence, 869 residues long: Probable beta-glucosidase F (869 aa).

Residues M1–S19 form the signal peptide. 2 N-linked (GlcNAc...) asparagine glycosylation sites follow: N77 and N261. D289 is an active-site residue. N-linked (GlcNAc...) asparagine glycans are attached at residues N332, N364, N399, and N478. The interval S677–P697 is disordered. Residues P681–T691 are compositionally biased toward pro residues. N728 carries N-linked (GlcNAc...) asparagine glycosylation.

This sequence belongs to the glycosyl hydrolase 3 family.

It is found in the secreted. It carries out the reaction Hydrolysis of terminal, non-reducing beta-D-glucosyl residues with release of beta-D-glucose.. It functions in the pathway glycan metabolism; cellulose degradation. In terms of biological role, beta-glucosidases are one of a number of cellulolytic enzymes involved in the degradation of cellulosic biomass. Catalyzes the last step releasing glucose from the inhibitory cellobiose. This chain is Probable beta-glucosidase F (bglF), found in Aspergillus fumigatus (strain CBS 144.89 / FGSC A1163 / CEA10) (Neosartorya fumigata).